A 44-amino-acid chain; its full sequence is YSRCQLQGFNCVVRSYGLPTIPCCRGLTCRSYFPGSTYGRCQRF.

3 disulfides stabilise this stretch: Cys4–Cys24, Cys11–Cys29, and Cys23–Cys41.

Granular hemocytes, small secretory granules.

It localises to the secreted. Its function is as follows. Exhibits stronger antimicrobial activity against the Gram-positive bacteria (S.aureus (IC(50) is 4.2 ug/ml)) and fungi (C.albicans (IC(50) is 3.0 ug/ml) and P.pastoris (IC(50) is 0.5 ug/ml)) than Gram-negative bacteria (E.coli (IC(50) is 25 ug/ml)). Binds to chitin (8.4 uM are required to obtain 50% of binding). Does not cause hemolysis on sheep erythrocytes. Has no blocking activity on the P-type calcium channel. This is Tachystatin-A1 from Tachypleus tridentatus (Japanese horseshoe crab).